The following is a 944-amino-acid chain: Weak acid resistance protein 1 (944 aa).

The zn(2)-C6 fungal-type DNA-binding region spans 76-109 (CVCCHSLKQKCEPSDVNDIYRKPCRRCLKHKKLC). Disordered regions lie at residues 114–171 (SKRT…AKQF) and 197–225 (SYGAREAETTSTGEITTNNHTKSNGSVPT). Phosphothreonine is present on threonine 128. Composition is skewed to polar residues over residues 135 to 144 (VNVSTKSKGP) and 205 to 225 (TTSTGEITTNNHTKSNGSVPT).

In terms of assembly, homodimer. In terms of processing, phosphorylation is required for PDR12 induction.

The protein resides in the nucleus. Functionally, transcription factor which binds to a weak acid response element (WARE) to mediate stress induction of PDR12 and FUN34, encoding an acid transporter and a putative ammonia transporter, respectively. This is Weak acid resistance protein 1 (WAR1) from Saccharomyces cerevisiae (strain ATCC 204508 / S288c) (Baker's yeast).